Here is a 378-residue protein sequence, read N- to C-terminus: Cobalt-precorrin-5B C(1)-methyltransferase (378 aa).

Belongs to the CbiD family.

The enzyme catalyses Co-precorrin-5B + S-adenosyl-L-methionine = Co-precorrin-6A + S-adenosyl-L-homocysteine. It participates in cofactor biosynthesis; adenosylcobalamin biosynthesis; cob(II)yrinate a,c-diamide from sirohydrochlorin (anaerobic route): step 6/10. In terms of biological role, catalyzes the methylation of C-1 in cobalt-precorrin-5B to form cobalt-precorrin-6A. In Photorhabdus laumondii subsp. laumondii (strain DSM 15139 / CIP 105565 / TT01) (Photorhabdus luminescens subsp. laumondii), this protein is Cobalt-precorrin-5B C(1)-methyltransferase.